Here is a 406-residue protein sequence, read N- to C-terminus: Type II secretion system protein F (406 aa).

The Cytoplasmic segment spans residues 1 to 171 (MAAFEYKALD…KMRSKLQQAM (171 aa)). Ca(2+) contacts are provided by glutamate 97, glutamate 151, and aspartate 155. Residues 172–192 (IYPVVLVVFAVGIVAFLLAAV) traverse the membrane as a helical segment. Topologically, residues 193–223 (VPKIVGQFVQMGQALPASTQFLLDASDFLQH) are periplasmic. Residues 224-244 (WGISLLVGLLMLIYLVRWLLT) traverse the membrane as a helical segment. Over 245-368 (KPDIRLRWDR…QDNSFESTVN (124 aa)) the chain is Cytoplasmic. A helical membrane pass occupies residues 369 to 389 (IALGIFTPALIALMAGMVLFI). The Periplasmic segment spans residues 390-406 (VMATLMPILEMNNLMSR).

The protein belongs to the GSP F family. In terms of assembly, type II secretion system is composed of four main components: the outer membrane complex, the inner membrane complex, the cytoplasmic secretion ATPase and the periplasm-spanning pseudopilus. Homodimer. Interacts with EpsE/GspE and EpsL/GspL components.

It localises to the cell inner membrane. In terms of biological role, component of the type II secretion system inner membrane complex required for the energy-dependent secretion of extracellular factors such as proteases and toxins from the periplasm. The protein is Type II secretion system protein F (epsF) of Vibrio cholerae serotype O1 (strain ATCC 39315 / El Tor Inaba N16961).